Here is a 158-residue protein sequence, read N- to C-terminus: NADH-quinone oxidoreductase subunit B (158 aa).

Residues cysteine 37, cysteine 38, cysteine 102, and cysteine 132 each coordinate [4Fe-4S] cluster.

Belongs to the complex I 20 kDa subunit family. NDH-1 is composed of 14 different subunits. Subunits NuoB, C, D, E, F, and G constitute the peripheral sector of the complex. [4Fe-4S] cluster is required as a cofactor.

The protein localises to the cell inner membrane. It catalyses the reaction a quinone + NADH + 5 H(+)(in) = a quinol + NAD(+) + 4 H(+)(out). NDH-1 shuttles electrons from NADH, via FMN and iron-sulfur (Fe-S) centers, to quinones in the respiratory chain. Couples the redox reaction to proton translocation (for every two electrons transferred, four hydrogen ions are translocated across the cytoplasmic membrane), and thus conserves the redox energy in a proton gradient. The protein is NADH-quinone oxidoreductase subunit B of Aromatoleum aromaticum (strain DSM 19018 / LMG 30748 / EbN1) (Azoarcus sp. (strain EbN1)).